Here is a 491-residue protein sequence, read N- to C-terminus: MSVAPETTVALQDRFFRELPELAVRWQAETFPELRLLVLNEPLATQLGLDTGWLRGPDGLRFLTGNLVPTGAAPVAQAYSGHQFGGFVPRLGDGRALLLGELVDNKGRLRDIHLKGSGATPFARGGDGLAAVGPMLREYVVSEAMHALGVPTTRSLAVVGTGRPVYREATLPGAVLARVASSHLRVGSFQYAAATGNRDLLRRLADHAIARHHPGAADAEQPYLALFEAVVAAQASLIAQWMLIGFVHGVMNTDNMTISGETIDYGPCAFMEAYDPDTVFSSIDFWGRYAYGNQPVIAGWNLARFAETLLPLFSENTEEAIALAERSFGVFQTRYDAVWATGMRAKLGLPAQVDAEFAAALIDELLALLKANHVDYTSFFRQLGRAARGDDRSAAEPAREMFMDLPGFDAWLARWRALGPDADAMDRVNPIYIPRNHLVEEALAAATDGDLDPLDQLLAAVTAPYTERPGFERYASPAPEDFGKYQTFCGT.

The ATP site is built by G92, G94, R95, K115, D127, G128, R178, and R185. D254 acts as the Proton acceptor in catalysis. Residues N255 and D264 each contribute to the Mg(2+) site. An ATP-binding site is contributed by D264.

It belongs to the SELO family. Requires Mg(2+) as cofactor. Mn(2+) is required as a cofactor.

The enzyme catalyses L-seryl-[protein] + ATP = 3-O-(5'-adenylyl)-L-seryl-[protein] + diphosphate. It carries out the reaction L-threonyl-[protein] + ATP = 3-O-(5'-adenylyl)-L-threonyl-[protein] + diphosphate. The catalysed reaction is L-tyrosyl-[protein] + ATP = O-(5'-adenylyl)-L-tyrosyl-[protein] + diphosphate. It catalyses the reaction L-histidyl-[protein] + UTP = N(tele)-(5'-uridylyl)-L-histidyl-[protein] + diphosphate. The enzyme catalyses L-seryl-[protein] + UTP = O-(5'-uridylyl)-L-seryl-[protein] + diphosphate. It carries out the reaction L-tyrosyl-[protein] + UTP = O-(5'-uridylyl)-L-tyrosyl-[protein] + diphosphate. Its function is as follows. Nucleotidyltransferase involved in the post-translational modification of proteins. It can catalyze the addition of adenosine monophosphate (AMP) or uridine monophosphate (UMP) to a protein, resulting in modifications known as AMPylation and UMPylation. This is Protein nucleotidyltransferase YdiU from Mycolicibacterium paratuberculosis (strain ATCC BAA-968 / K-10) (Mycobacterium paratuberculosis).